Consider the following 208-residue polypeptide: Putative ribosomal protein uS2-like (208 aa).

The protein belongs to the universal ribosomal protein uS2 family.

It is found in the plastid. Its subcellular location is the chloroplast. The sequence is that of Putative ribosomal protein uS2-like (rps2-2) from Chlamydomonas reinhardtii (Chlamydomonas smithii).